We begin with the raw amino-acid sequence, 103 residues long: GP16 protein (103 aa).

This is GP16 protein (GP16) from Orgyia pseudotsugata multicapsid polyhedrosis virus (OpMNPV).